Consider the following 282-residue polypeptide: 4-diphosphocytidyl-2-C-methyl-D-erythritol kinase (282 aa).

Lysine 11 is a catalytic residue. Residue 93–103 (LVSAGLAGGSA) coordinates ATP. Residue aspartate 133 is part of the active site.

This sequence belongs to the GHMP kinase family. IspE subfamily.

It catalyses the reaction 4-CDP-2-C-methyl-D-erythritol + ATP = 4-CDP-2-C-methyl-D-erythritol 2-phosphate + ADP + H(+). It participates in isoprenoid biosynthesis; isopentenyl diphosphate biosynthesis via DXP pathway; isopentenyl diphosphate from 1-deoxy-D-xylulose 5-phosphate: step 3/6. Catalyzes the phosphorylation of the position 2 hydroxy group of 4-diphosphocytidyl-2C-methyl-D-erythritol. In Ehrlichia canis (strain Jake), this protein is 4-diphosphocytidyl-2-C-methyl-D-erythritol kinase.